The primary structure comprises 106 residues: Pyrimidine/purine nucleoside phosphorylase (106 aa).

It belongs to the nucleoside phosphorylase PpnP family.

The catalysed reaction is a purine D-ribonucleoside + phosphate = a purine nucleobase + alpha-D-ribose 1-phosphate. It catalyses the reaction adenosine + phosphate = alpha-D-ribose 1-phosphate + adenine. It carries out the reaction cytidine + phosphate = cytosine + alpha-D-ribose 1-phosphate. The enzyme catalyses guanosine + phosphate = alpha-D-ribose 1-phosphate + guanine. The catalysed reaction is inosine + phosphate = alpha-D-ribose 1-phosphate + hypoxanthine. It catalyses the reaction thymidine + phosphate = 2-deoxy-alpha-D-ribose 1-phosphate + thymine. It carries out the reaction uridine + phosphate = alpha-D-ribose 1-phosphate + uracil. The enzyme catalyses xanthosine + phosphate = alpha-D-ribose 1-phosphate + xanthine. Catalyzes the phosphorolysis of diverse nucleosides, yielding D-ribose 1-phosphate and the respective free bases. Can use uridine, adenosine, guanosine, cytidine, thymidine, inosine and xanthosine as substrates. Also catalyzes the reverse reactions. In Burkholderia cenocepacia (strain ATCC BAA-245 / DSM 16553 / LMG 16656 / NCTC 13227 / J2315 / CF5610) (Burkholderia cepacia (strain J2315)), this protein is Pyrimidine/purine nucleoside phosphorylase.